The following is a 998-amino-acid chain: Collagen alpha-1(I) chain (998 aa).

The tract at residues 1–998 (GGVSVPGPMG…PGPPGPPGPP (998 aa)) is disordered. Residues Pro18, Pro21, Pro24, Pro33, Pro48, Pro63, Pro69, Pro78, and Pro84 each carry the 4-hydroxyproline modification. Residues 26–39 (PQGFQGPPGSSGPM) show a composition bias toward low complexity. Residues 51-65 (NGDDGEAGKPGRPGE) are compositionally biased toward basic and acidic residues. Lys87 is subject to 5-hydroxylysine; alternate. O-linked (Gal...) hydroxylysine; alternate glycosylation occurs at Lys87. Residue Ser93 is modified to Phosphoserine. The span at 101–115 (DAGPAGPKQMGPRGL) shows a compositional bias: low complexity. Residues Pro116, Pro122, Pro143, Pro152, Pro155, Pro182, Pro185, Pro197, Pro203, Pro212, Pro218, Pro221, and Pro236 each carry the 4-hydroxyproline modification. The span at 122–140 (PGASGPAGARGNDGATGAA) shows a compositional bias: low complexity. Residues 142–154 (PPGPTGPAGPPGF) are compositionally biased toward pro residues. The segment covering 188 to 238 (AGAAGPAGNPGADGQPGAKGANGAPGIAGAPGFPGARGPSGPQGPSGAPGP) has biased composition (low complexity). Lys239 carries the 5-hydroxylysine modification. 4-hydroxyproline is present on residues Pro245, Pro248, Pro260, Pro269, Pro284, Pro290, Pro299, and Pro305. Positions 294 to 303 (GERGGPGSRG) are enriched in gly residues. Lys314 is modified (5-hydroxylysine). Residues Pro323, Pro332, Pro338, Pro344, Pro353, Pro356, Pro365, Pro374, Pro380, Pro392, Pro401, Pro410, Pro413, Pro431, Pro449, Pro455, Pro461, Pro467, Pro473, Pro479, Pro491, Pro500, Pro511, Pro523, Pro526, Pro532, Pro538, and Pro547 each carry the 4-hydroxyproline modification. Low complexity predominate over residues 347–401 (KGLTGSPGSPGPDGKTGPPGPAGQDGRPGPAGPPGARGQAGVMGFPGPKGAAGEP). Positions 443 to 470 (QGPAGSPGFQGLPGPAGPPGEAGKPGEQ) are enriched in low complexity. Residues 513–535 (NDGAKGDAGAPGAPGSQGAPGLQ) are compositionally biased toward low complexity. A 5-hydroxylysine modification is found at Lys559. Residues Pro565 and Pro580 each carry the 4-hydroxyproline modification. A compositionally biased stretch (low complexity) spans 592 to 606 (TGPSGPAGPTGARGA). Ser595 bears the Phosphoserine mark. 4-hydroxyproline occurs at positions 607, 613, 616, 625, 631, 649, 658, and 667. The span at 619–646 (AGFAGPPGADGQPGAKGEPGDAGAKGDA) shows a compositional bias: low complexity. The segment covering 648 to 660 (PPGPAGPTGPPGP) has biased composition (pro residues). Position 670 is a 5-hydroxylysine (Lys670). Positions 675 to 691 (SAGPPGATGFPGAAGRV) are enriched in low complexity. Pro679 and Pro685 each carry 4-hydroxyproline. At Pro693 the chain carries 3-hydroxyproline. A 4-hydroxyproline mark is found at Pro694, Pro703, Pro706, Pro727, Pro736, Pro744, Pro753, Pro771, Pro780, Pro783, Pro789, Pro804, Pro810, Pro816, Pro825, and Pro831. Residues 720–729 (ETGPAGRPGE) show a composition bias toward low complexity. The segment covering 741 to 762 (KGSPGADGPAGAPGTPGPQGIA) has biased composition (low complexity). Positions 803–813 (PPGPMGPPGLA) are enriched in pro residues. Residues 815–830 (PPGEAGREGSPGAEGS) show a composition bias toward low complexity. Lys840 carries the post-translational modification 5-hydroxylysine. A compositionally biased stretch (pro residues) spans 848–863 (PGPPGAPGAPGAPGPV). A 4-hydroxyproline mark is found at Pro851, Pro854, and Pro857. Low complexity predominate over residues 884–898 (AGPAGARGPAGPQGP). A compositionally biased stretch (basic and acidic residues) spans 899–913 (RGDKGETGEQGDRGI). A 5-hydroxylysine modification is found at Lys902. Lys914 carries the post-translational modification 5-hydroxylysine; alternate. A glycan (O-linked (Gal...) hydroxylysine; alternate) is linked at Lys914. 4-hydroxyproline is present on residues Pro929, Pro932, Pro950, and Pro965. The span at 932–965 (PGEQGPSGASGPAGPRGPPGSAGTPGKDGLNGLP) shows a compositional bias: low complexity. Pro970 carries the 3-hydroxyproline modification. A 4-hydroxyproline modification is found at Pro971. The segment covering 983–998 (VGPPGPPGPPGPPGPP) has biased composition (pro residues). Pro985 bears the 3-hydroxyproline mark. Pro986 is modified (4-hydroxyproline). Pro988 carries the post-translational modification 3-hydroxyproline. Position 989 is a 4-hydroxyproline (Pro989). Pro991 carries the 3-hydroxyproline modification. 4-hydroxyproline is present on residues Pro992, Pro995, and Pro998.

This sequence belongs to the fibrillar collagen family. Trimers of one alpha 2(I) and two alpha 1(I) chains. In terms of processing, contains mostly 4-hydroxyproline. Proline residues at the third position of the tripeptide repeating unit (G-X-Y) are hydroxylated in some or all of the chains. Contains 3-hydroxyproline at a few sites. This modification occurs on the first proline residue in the sequence motif Gly-Pro-Hyp, where Hyp is 4-hydroxyproline. Post-translationally, lysine residues at the third position of the tripeptide repeating unit (G-X-Y) are 5-hydroxylated in some or all of the chains. In terms of processing, O-glycosylated on hydroxylated lysine residues. The O-linked glycan consists of a Glc-Gal disaccharide. As to expression, expressed in bones.

The protein localises to the secreted. It is found in the extracellular space. It localises to the extracellular matrix. Its function is as follows. Type I collagen is a member of group I collagen (fibrillar forming collagen). The polypeptide is Collagen alpha-1(I) chain (Glyptodon sp. (strain SLP-2019) (Giant armadillo)).